The primary structure comprises 135 residues: Serine protease inhibitor swm-1 (135 aa).

The signal sequence occupies residues 1–16 (MRILVIITCIVAVATA). Disulfide bonds link C20/C53, C29/C48, C33/C44, C37/C73, C55/C67, C80/C114, C89/C109, C93/C105, C97/C133, and C116/C127. TIL domains lie at 20-73 (CEAN…VSEC) and 80-133 (CPEN…KKDC). The N-linked (GlcNAc...) asparagine glycan is linked to N83.

In male, expressed in the vas deferens cuboidal cells and, in posterior body wall and male-specific diagonal muscles. In hermaphrodites, expressed in posterior body wall muscles and spermatheca.

It is found in the secreted. Its subcellular location is the cytoplasmic vesicle. The protein resides in the secretory vesicle lumen. Its function is as follows. Serine protease inhibitor. Probably by inhibiting serine protease tyr-5 in males, prevents the maturation of spermatids into mature motile spermatozoa until their transfer into a hermaphrodite. Also required for efficient sperm transfer and thus for male fertility. This chain is Serine protease inhibitor swm-1, found in Caenorhabditis elegans.